Consider the following 250-residue polypeptide: Acidic leucine-rich nuclear phosphoprotein 32 family member E (250 aa).

Serine 8 is subject to Phosphoserine. LRR repeat units lie at residues 43-64 (ELEFLSMVNVGLTSLAKLPSLP), 65-87 (KLRKLELSDNNISGTLETLAEKC), and 89-110 (NLTYLNLSGNKIKELSTLEALQ). The 39-residue stretch at 123–161 (CEITTLEDYRESIFELLPQVTYLDGFDAEDNEAPDSEAD) folds into the LRRCT domain. Composition is skewed to acidic residues over residues 149-171 (DAEDNEAPDSEADDDDDDEDGDE), 178-191 (EYEEEEEEDEEGSE), and 205-227 (IQDEEDDDDYVEEEEEEGGEEEA). The disordered stretch occupies residues 149–250 (DAEDNEAPDS…EGEDDDEDDD (102 aa)). Positions 194–247 (EVGLSYLMKEDIQDEEDDDDYVEEEEEEGGEEEADVRGEKRKREAEDEGEDDDE) are ZID domain. The segment covering 228–238 (DVRGEKRKREA) has biased composition (basic and acidic residues). The span at 239–250 (EDEGEDDDEDDD) shows a compositional bias: acidic residues.

It belongs to the ANP32 family. Component of a SWR1-like complex. Interacts with H2A.Z/H2AZ1. In terms of processing, phosphorylated. The phosphorylation is nuclear localization signal (NLS)-dependent.

Its subcellular location is the cytoplasm. The protein resides in the nucleus. Functionally, histone chaperone that specifically mediates the genome-wide removal of histone H2A.Z/H2AZ1 from the nucleosome: removes H2A.Z/H2AZ1 from its normal sites of deposition, especially from enhancer and insulator regions. Not involved in deposition of H2A.Z/H2AZ1 in the nucleosome. May stabilize the evicted H2A.Z/H2AZ1-H2B dimer, thus shifting the equilibrium towards dissociation and the off-chromatin state. Inhibits activity of protein phosphatase 2A (PP2A). Does not inhibit protein phosphatase 1. May play a role in cerebellar development and synaptogenesis. This Danio rerio (Zebrafish) protein is Acidic leucine-rich nuclear phosphoprotein 32 family member E (anp32e).